The chain runs to 116 residues: Iron-sulfur cluster insertion protein ErpA (116 aa).

Iron-sulfur cluster-binding residues include Cys44, Cys108, and Cys110.

The protein belongs to the HesB/IscA family. As to quaternary structure, homodimer. Iron-sulfur cluster is required as a cofactor.

Its function is as follows. Required for insertion of 4Fe-4S clusters for at least IspG. This Ectopseudomonas mendocina (strain ymp) (Pseudomonas mendocina) protein is Iron-sulfur cluster insertion protein ErpA.